We begin with the raw amino-acid sequence, 178 residues long: FXYD domain-containing ion transport regulator 5 (178 aa).

A signal peptide spans 1-21; sequence MSLSSRLCLLTIVALILPSRG. Over residues 21–59 the composition is skewed to polar residues; sequence GQTPKKPTSIFTADQTSATTRDNVPDPDQTSPGVQTTPL. Positions 21 to 130 are disordered; the sequence is GQTPKKPTSI…SYIEHPLDSN (110 aa). At 22 to 145 the chain is on the extracellular side; it reads QTPKKPTSIF…YYDDTTLRKR (124 aa). Over residues 67–79 the composition is skewed to low complexity; it reads TGSQTAAQTETQQ. Residues 80-100 show a composition bias toward polar residues; the sequence is LTKMATSNPVSDPGPHTSSKK. A helical membrane pass occupies residues 146–166; it reads GLLVAAVLFITGIIILTSGKC. The Cytoplasmic portion of the chain corresponds to 167–178; the sequence is RQLSQFCLNRHR.

Belongs to the FXYD family. Regulatory subunit of the sodium/potassium-transporting ATPase which is composed of a catalytic alpha subunit, a non-catalytic beta subunit and an additional regulatory subunit. The regulatory subunit, a member of the FXYD protein family, modulates the enzymatic activity in a tissue- and isoform-specific way by changing affinities of the Na+/K+-ATPase toward Na(+), K(+) or ATP. Glycosylated. In terms of tissue distribution, expressed mainly in epithelial tissue, such as lung, intestine and kidney. Not detected in brain, liver, muscle, and heart.

The protein localises to the cell membrane. It is found in the basolateral cell membrane. In terms of biological role, associates with and regulates the activity of the sodium/potassium-transporting ATPase (NKA) which catalyzes the hydrolysis of ATP coupled with the exchange of Na(+) and K(+) ions across the plasma membrane. May increase NKA activity by increasing the apparent affinity for Na(+). Involved in down-regulation of E-cadherin which results in reduced cell adhesion. Promotes metastasis. This chain is FXYD domain-containing ion transport regulator 5 (Fxyd5), found in Mus musculus (Mouse).